Here is a 2256-residue protein sequence, read N- to C-terminus: MDDKGHLSNEEAPKAIKPTSKEFRKTWGFRRTTIAKREGAGDTEVDPSEQQPQQHNLSLRRSGRQPKRTERVEEFLTTVRRRGKKNVPVSLEDSSEPTSSTVTDVETASEGSVESSSEIRSGPVSDSLGKEHPASSEKAKGGEEEEDTSDSDSDGLTLKELQNRLRRKREQEPVERSLRGSQNRLRKKRREEDSAETGSVQIGSAEQDRPLCKQEPEASQGPVSQSETDDIENQLEGKATQGNTEENPREAGKPKPECEVYDPNALYCICRQPHNNRFMICCDRCEEWFHGDCVGISEARGRLLERNGEDYICPNCTILQVQDETNGSATDEQDSGCRSVGADGTDCTSIGTVEQKSGEDQGIKGRIEKAANPSGKKKLKIFQPVVEAPGAPKCIGPGCSSVAQPDSVYCSNDCILKHAAATMRFLSSGKEQKTKPKEKVKTKPEKFSLPKCSVQVGIKISSVHKRLASEKRENPVKKVMLASRSETSGKEAACESSTPSWASDHNYNAVKPEKPEKPTALSPTLLSKSMKDDRRVEDRTMAAVTIPKKALPSASLVGRQTSPRNLVPKKLPPYSNMAGAKPAIKKLPSGFKGTIPKRPWPSATLSGTSARQAGPTPMTAASKKLPGSAAVVGVTRKPMSANVPAASPAPGRLGPVSPAPSQPNSQIRQNIRRSLKEILWKRVNDSDDLIMTENEVGKIALHIEKEMFNLFQVTDNRYKSKYRSIMFNLKDPKNQGLFHRVLREEISLAKLVRMKPEELVSKELSMWTEKPTKSVIESRTKLLNESKKNTTKPETIPDMEDSPPVSDSEEQQESVRAAPEKSAAPLLDVFSSMLKDTTSQHRAHLFDLNCKICTGQVPSSEDEPAPKKQKLSASSKKEDFKPRHDSSPPNAVPNTADEGIADTLPENASEPDPESTSSLNQERKCFPESPGDSHPEPSSLGGLSPSSASGGSGVVTTVTMSGRDPRTALSGSCTVTASMAAHLDNSQASETKLDMIKPALTSAVVPKSILAKPSSSPDPRYLSVPPSPSISESRSPPEGDTTLFLSRLNTIWKGFINMQSVAKFVTKAYPVSGCLDYLSEDLPDTIHIGGRIAPKTVWDYVGKLKSSVSKELCLIRFHPATEEEEVAYISLYSYFSSRGRFGVVANNNRHVKDLYLIPLSAKDPVPSKLLPFEGPGLESPRPNIILGLVICQKVKRPSSAGELDKTDEKRTRLQQEELETSVYPKVTAALPSEKKPPKYSVHSIDTAATSTTPPGSPPPPPPLPEPPVLKILSSLKPGSTSTVTAPTTAAITTTASPVTAATSKTASPLEHILQTLFGKKKSFEPSGKESVGSTLSPHQDSKAKGEDTMSAAPLLDPIVQQFGQFSKDKALEEEEEDDRPYDPEEEYNPDRAFHTLLAEPGRPHDVQSVSETAEREEVAYDPEDETILEEAKVTIDDLPNRMCMKVSATERPADFTTDASSASLVEQQKMLEELNKQIEEQKRQLEEQEEALRQQRAAVGVSMAHFSVSDALMSPPPKSSLGKTELFSQEQQAPDPSQGAPNTNHNLDSRQSRDPRQARRLAAENTENESLPRAPTGSTPGPQGTLPARETPAGTAVVQGPGLAAEAKESMAVPWAPGENAVLRPEHDIQKCEHPGNPVSLPLDTSHLPTAGDGAARPAPPRRVLLPTPPSTTFPPSFPLQPKAQNFSSGSREPFSGPTFMSQETSLGSSQYEDPRGAQSAGKNDSPVADMEDSREPQPRPGESTTSFPQPGQRGGGPQPQFPGQREPAPRTFGMSGHHGPSFPGPRGPVPPYSEENLVPNSDGPRGPPPARFGAQKPPIPSLFSGQHGPPPYGDNRGLSPSYLGGPRGGAPAQFEDRKDPHGEKREFQDTPYNEMTGAPAQCEGPDQAQFMGNRAPFQFGGQRRPLLTQMKGPRGGPPPSQFGAQRGPPPGHFVGPRGPHPSQFENSRGTHPGQFEGARGQAPGFMPGPRGIQPQQFEEQRVNSPPRFAGQRASAPLPYGGPRGPAPFPEKNEQPPSRFHFQGPSSQPVKPPPRPLLELPSHPPQHRKDRWDEAGPATALPSSAGPGQGHEADGQWATSEFREGKGHEYRSPAFEGRQRERFEAGSKEKPLDEPEAQGLESRQGRAFEDRRRERERGRNWSRERDWERSRDWDRHREWDKGRDRSSNRDRERDNDRAKEWDRSRERSRNRDRDRERRRDRDRSRSRDRDRDRERARDRDRDRGRDRKDRSKSRESPRDQKPEARTSEGGPAAAQA.

Met1 is subject to N-acetylmethionine. A compositionally biased stretch (basic and acidic residues) spans 1 to 25; it reads MDDKGHLSNEEAPKAIKPTSKEFRK. A disordered region spans residues 1–256; it reads MDDKGHLSNE…NPREAGKPKP (256 aa). Composition is skewed to polar residues over residues 48–59 and 96–119; these read SEQQPQQHNLSL and EPTS…SSEI. Residues Ser58 and Ser112 each carry the phosphoserine modification. Positions 128–142 are enriched in basic and acidic residues; the sequence is LGKEHPASSEKAKGG. Residues 143–153 are compositionally biased toward acidic residues; sequence EEEEDTSDSDS. Thr148 is modified (phosphothreonine). Phosphoserine is present on residues Ser149 and Ser151. 2 short sequence motifs (nuclear localization signal) span residues 162 to 170 and 182 to 190; these read QNRLRRKRE and QNRLRKKRR. Positions 169-178 are enriched in basic and acidic residues; it reads REQEPVERSL. Composition is skewed to basic and acidic residues over residues 206–216 and 246–256; these read EQDRPLCKQEP and ENPREAGKPKP. The PHD-type zinc finger occupies 265-319; that stretch reads ALYCICRQPHNNRFMICCDRCEEWFHGDCVGISEARGRLLERNGEDYICPNCTIL. 7 disordered regions span residues 481 to 535, 598 to 624, 641 to 668, 778 to 822, 856 to 970, 1011 to 1039, and 1197 to 1218; these read LASR…DDRR, RPWP…ASKK, ANVP…SQIR, SRTK…PEKS, QVPS…TALS, AKPS…PPEG, and PSSA…QEEL. Over residues 495–506 the composition is skewed to polar residues; that stretch reads ESSTPSWASDHN. Phosphoserine is present on Ser522. The TFIIS central domain maps to 667–787; the sequence is IRQNIRRSLK…SRTKLLNESK (121 aa). Over residues 778 to 788 the composition is skewed to basic and acidic residues; sequence SRTKLLNESKK. Positions 797 to 812 are enriched in acidic residues; it reads PDMEDSPPVSDSEEQQ. Phosphoserine occurs at positions 802 and 806. 2 stretches are compositionally biased toward basic and acidic residues: residues 875 to 886 and 921 to 935; these read SKKEDFKPRHDS and QERK…DSHP. Lys876 is covalently cross-linked (Glycyl lysine isopeptide (Lys-Gly) (interchain with G-Cter in SUMO2)). Position 886 is a phosphoserine (Ser886). A compositionally biased stretch (low complexity) spans 937-962; it reads PSSLGGLSPSSASGGSGVVTTVTMSG. 3 positions are modified to phosphoserine: Ser1016, Ser1027, and Ser1035. The span at 1202-1215 shows a compositional bias: basic and acidic residues; that stretch reads ELDKTDEKRTRLQQ. Phosphotyrosine is present on Tyr1239. A disordered region spans residues 1245-1288; the sequence is DTAATSTTPPGSPPPPPPLPEPPVLKILSSLKPGSTSTVTAPTT. Position 1252 is a phosphothreonine (Thr1252). Over residues 1254 to 1267 the composition is skewed to pro residues; the sequence is PGSPPPPPPLPEPP. Position 1256 is a phosphoserine (Ser1256). Over residues 1279–1288 the composition is skewed to low complexity; that stretch reads STSTVTAPTT. Ser1307 carries the post-translational modification Phosphoserine. Disordered stretches follow at residues 1320–1347, 1362–1421, 1509–1609, and 1630–2256; these read KKSF…KGED, FGQF…VAYD, SDAL…EAKE, and QKCE…AAQA. Residues 1371–1387 are compositionally biased toward acidic residues; sequence LEEEEEDDRPYDPEEEY. Phosphoserine is present on Ser1514. A compositionally biased stretch (polar residues) spans 1526 to 1546; that stretch reads LFSQEQQAPDPSQGAPNTNHN. The span at 1547–1557 shows a compositional bias: basic and acidic residues; it reads LDSRQSRDPRQ. A compositionally biased stretch (low complexity) spans 1649-1666; the sequence is PTAGDGAARPAPPRRVLL. Positions 1667 to 1679 are enriched in pro residues; it reads PTPPSTTFPPSFP. Over residues 1699–1712 the composition is skewed to polar residues; it reads TFMSQETSLGSSQY. Ser1726 is subject to Phosphoserine. Over residues 1783–1792 the composition is skewed to pro residues; it reads FPGPRGPVPP. An Omega-N-methylarginine modification is found at Arg1848. Positions 1855 to 1869 are enriched in basic and acidic residues; it reads FEDRKDPHGEKREFQ. Arg1904, Arg1905, Arg1988, Arg1993, Arg2004, Arg2019, and Arg2035 each carry asymmetric dimethylarginine. 2 stretches are compositionally biased toward basic and acidic residues: residues 2081 to 2113 and 2123 to 2246; these read EFRE…KPLD and RQGR…EART.

In terms of assembly, interacts specifically (via PHD-type zinc finger) with histone H3 that is trimethylated at 'Lys-4' (H3K4me3), histone phosphorylation at 'Thr-3' or 'Thr-6' disrupts this binding and promotes translocation of DIDO1 from chromatin to the mitotic spindle during mitosis. Ubiquitous. Expressed at intermediate levels.

It is found in the cytoplasm. Its subcellular location is the nucleus. The protein localises to the cytoskeleton. It localises to the spindle. Required for early embryonic stem cell development. Putative transcription factor, weakly pro-apoptotic when overexpressed. In Mus musculus (Mouse), this protein is Death-inducer obliterator 1 (Dido1).